The following is a 395-amino-acid chain: MESFLFTSESVNEGHPDKLCDQVSDAVLDACLAQDPDSKVACETCTKTNMVMVFGEITTKANIDYEKIVRDTCRSIGFVSADVGLDADNCKVLVNIEQQSPDIAQGVHGHLTKRPEDVGAGDQGHMFGYATDETPELMPLSHVLATKLGARLTEVRKNGTCAWLRPDGKTQVTVEYNNDNGAMVPIRVHTVLISTQHDETVTNEQIAADLKEHVIKPVIPEKYLDDKTIFHLNPSGRFVIGGPHGDAGLTGRKIIIDTYGGWGAHGGGAFSGKDPTKVDRSGAYIVRQAAKSIVANGLARRAIVQVSYAIGVPEPLSVFVDTYGTGKIPDKDILKIVKENFDFRPGMISINLDLKRGGNARFQKTAAYGHFGRDDPDFTWETVKPLKWEKVPASS.

Mg(2+) is bound at residue E9. H15 serves as a coordination point for ATP. E43 is a K(+) binding site. L-methionine-binding residues include E56 and Q99. ATP contacts are provided by residues D167 to K169, S235 to F238, D246, R252 to K253, A269, K273, and K277. D246 lines the L-methionine pocket. K277 lines the L-methionine pocket.

This sequence belongs to the AdoMet synthase family. As to quaternary structure, homotetramer. It depends on Mn(2+) as a cofactor. The cofactor is Mg(2+). Co(2+) serves as cofactor. K(+) is required as a cofactor.

The protein resides in the cytoplasm. It catalyses the reaction L-methionine + ATP + H2O = S-adenosyl-L-methionine + phosphate + diphosphate. The protein operates within amino-acid biosynthesis; S-adenosyl-L-methionine biosynthesis; S-adenosyl-L-methionine from L-methionine: step 1/1. Its function is as follows. Catalyzes the formation of S-adenosylmethionine from methionine and ATP. The reaction comprises two steps that are both catalyzed by the same enzyme: formation of S-adenosylmethionine (AdoMet) and triphosphate, and subsequent hydrolysis of the triphosphate. This is S-adenosylmethionine synthase 2 (METK2) from Suaeda salsa (Seepweed).